Here is a 69-residue protein sequence, read N- to C-terminus: uncharacterized protein (69 aa).

Residues 1–15 lie on the Cytoplasmic side of the membrane; sequence MLLYIVIIVACIISK. The chain crosses the membrane as a helical span at residues 16–36; the sequence is LVPNEYWAIHLFFIIMIFMVY. Residues 37 to 69 lie on the Extracellular side of the membrane; sequence MYEKLDIHQKYQFWNYTMSGLSGHNVQVICKCY. Asn-51 carries an N-linked (GlcNAc...) asparagine; by host glycan.

This sequence belongs to the asfivirus X69R family.

The protein resides in the host membrane. This is an uncharacterized protein from Ornithodoros (relapsing fever ticks).